The primary structure comprises 491 residues: Cytochrome P450 2H2 (491 aa).

C436 serves as a coordination point for heme.

This sequence belongs to the cytochrome P450 family. The cofactor is heme.

The protein resides in the endoplasmic reticulum membrane. It is found in the microsome membrane. The enzyme catalyses an organic molecule + reduced [NADPH--hemoprotein reductase] + O2 = an alcohol + oxidized [NADPH--hemoprotein reductase] + H2O + H(+). Its function is as follows. Cytochromes P450 are a group of heme-thiolate monooxygenases. In liver microsomes, this enzyme is involved in an NADPH-dependent electron transport pathway. It oxidizes a variety of structurally unrelated compounds, including steroids, fatty acids, and xenobiotics. This Gallus gallus (Chicken) protein is Cytochrome P450 2H2 (CYP2H2).